The following is a 205-amino-acid chain: Urease accessory protein UreG (205 aa).

Residue 11-18 (GPVGSGKT) participates in GTP binding.

This sequence belongs to the SIMIBI class G3E GTPase family. UreG subfamily. As to quaternary structure, homodimer. UreD, UreF and UreG form a complex that acts as a GTP-hydrolysis-dependent molecular chaperone, activating the urease apoprotein by helping to assemble the nickel containing metallocenter of UreC. The UreE protein probably delivers the nickel.

It is found in the cytoplasm. In terms of biological role, facilitates the functional incorporation of the urease nickel metallocenter. This process requires GTP hydrolysis, probably effectuated by UreG. In Prochlorococcus marinus (strain NATL2A), this protein is Urease accessory protein UreG.